Consider the following 413-residue polypeptide: Protein MANNAN SYNTHESIS-RELATED (413 aa).

Over 1-5 (MNSME) the chain is Cytoplasmic. A helical; Signal-anchor for type II membrane protein transmembrane segment spans residues 6 to 26 (IRQAFAGLLTLSMFIMLGNMI). The Lumenal segment spans residues 27–413 (KKDHFDYPAE…KNHLAYKCFC (387 aa)). The N-linked (GlcNAc...) asparagine glycan is linked to Asn207. 255–257 (DLR) lines the substrate pocket.

It belongs to the glycosyltransferase GT106 family. In terms of tissue distribution, highly and specifically expressed in the endosperm.

The protein resides in the golgi apparatus membrane. The protein operates within glycan biosynthesis. In terms of biological role, glycosyltransferase involved in mannan biosynthesis. In Trigonella foenum-graecum (Fenugreek), this protein is Protein MANNAN SYNTHESIS-RELATED.